We begin with the raw amino-acid sequence, 161 residues long: Nucleotide-binding protein Lferr_1091 (161 aa).

This sequence belongs to the YajQ family.

Functionally, nucleotide-binding protein. The chain is Nucleotide-binding protein Lferr_1091 from Acidithiobacillus ferrooxidans (strain ATCC 53993 / BNL-5-31) (Leptospirillum ferrooxidans (ATCC 53993)).